Consider the following 446-residue polypeptide: tRNA-2-methylthio-N(6)-dimethylallyladenosine synthase (446 aa).

An MTTase N-terminal domain is found at 6-122 (RRYHITTFGC…LGDLLQQVFD (117 aa)). 6 residues coordinate [4Fe-4S] cluster: Cys15, Cys51, Cys85, Cys157, Cys161, and Cys164. In terms of domain architecture, Radical SAM core spans 143–380 (RDSNITAWVN…NHLVATKAAE (238 aa)). The TRAM domain maps to 383–446 (QRYLGRIEEI…RPFSLTGVIF (64 aa)).

Belongs to the methylthiotransferase family. MiaB subfamily. In terms of assembly, monomer. It depends on [4Fe-4S] cluster as a cofactor.

Its subcellular location is the cytoplasm. The enzyme catalyses N(6)-dimethylallyladenosine(37) in tRNA + (sulfur carrier)-SH + AH2 + 2 S-adenosyl-L-methionine = 2-methylsulfanyl-N(6)-dimethylallyladenosine(37) in tRNA + (sulfur carrier)-H + 5'-deoxyadenosine + L-methionine + A + S-adenosyl-L-homocysteine + 2 H(+). Catalyzes the methylthiolation of N6-(dimethylallyl)adenosine (i(6)A), leading to the formation of 2-methylthio-N6-(dimethylallyl)adenosine (ms(2)i(6)A) at position 37 in tRNAs that read codons beginning with uridine. This Microcystis aeruginosa (strain NIES-843 / IAM M-2473) protein is tRNA-2-methylthio-N(6)-dimethylallyladenosine synthase.